Here is a 183-residue protein sequence, read N- to C-terminus: MGLEIVVKDIQEGASAEVSRIKAEGDAKASEIINEAKEVQKKTLGDSLAKAEEDLQNLHQQVISSANLEVKRITLNKRKDLLDKVYVQTVEKIKSMPASKKEELLKNILSKYEASGARVYSSKDSEDIVKKLTSLSYAGNLDAIGGIVLENEDGTVRLDFTYDSILKNVYERSLKQISDLLYG.

It belongs to the V-ATPase E subunit family. Has multiple subunits with at least A(3), B(3), C, D, E, F, H, I and proteolipid K(x).

It localises to the cell membrane. Its function is as follows. Component of the A-type ATP synthase that produces ATP from ADP in the presence of a proton gradient across the membrane. The chain is A-type ATP synthase subunit E from Methanosarcina barkeri (strain Fusaro / DSM 804).